Here is a 200-residue protein sequence, read N- to C-terminus: Dephospho-CoA kinase (200 aa).

Positions 3–200 (RIGLTGGIGS…LIAEILSRVN (198 aa)) constitute a DPCK domain. 11-16 (GSGKST) contacts ATP.

The protein belongs to the CoaE family.

It is found in the cytoplasm. It catalyses the reaction 3'-dephospho-CoA + ATP = ADP + CoA + H(+). Its pathway is cofactor biosynthesis; coenzyme A biosynthesis; CoA from (R)-pantothenate: step 5/5. Catalyzes the phosphorylation of the 3'-hydroxyl group of dephosphocoenzyme A to form coenzyme A. This Corynebacterium glutamicum (strain ATCC 13032 / DSM 20300 / JCM 1318 / BCRC 11384 / CCUG 27702 / LMG 3730 / NBRC 12168 / NCIMB 10025 / NRRL B-2784 / 534) protein is Dephospho-CoA kinase.